Reading from the N-terminus, the 435-residue chain is Histidinol dehydrogenase (435 aa).

Tyr131, Gln189, and Asn212 together coordinate NAD(+). The substrate site is built by Ser238, Gln260, and His263. Zn(2+) is bound by residues Gln260 and His263. Catalysis depends on proton acceptor residues Glu327 and His328. The substrate site is built by His328, Asp361, Glu415, and His420. Asp361 is a binding site for Zn(2+). His420 contributes to the Zn(2+) binding site.

This sequence belongs to the histidinol dehydrogenase family. Homodimer. The cofactor is Zn(2+).

It catalyses the reaction L-histidinol + 2 NAD(+) + H2O = L-histidine + 2 NADH + 3 H(+). It participates in amino-acid biosynthesis; L-histidine biosynthesis; L-histidine from 5-phospho-alpha-D-ribose 1-diphosphate: step 9/9. In terms of biological role, catalyzes the sequential NAD-dependent oxidations of L-histidinol to L-histidinaldehyde and then to L-histidine. The sequence is that of Histidinol dehydrogenase from Buchnera aphidicola subsp. Baizongia pistaciae (strain Bp).